Reading from the N-terminus, the 314-residue chain is Small ribosomal subunit protein uS2c (314 aa).

Belongs to the universal ribosomal protein uS2 family.

The protein resides in the plastid. The protein localises to the chloroplast. This is Small ribosomal subunit protein uS2c (rps2) from Stigeoclonium helveticum (Green alga).